A 184-amino-acid polypeptide reads, in one-letter code: ATP synthase subunit delta (184 aa).

This sequence belongs to the ATPase delta chain family. In terms of assembly, F-type ATPases have 2 components, F(1) - the catalytic core - and F(0) - the membrane proton channel. F(1) has five subunits: alpha(3), beta(3), gamma(1), delta(1), epsilon(1). F(0) has three main subunits: a(1), b(2) and c(10-14). The alpha and beta chains form an alternating ring which encloses part of the gamma chain. F(1) is attached to F(0) by a central stalk formed by the gamma and epsilon chains, while a peripheral stalk is formed by the delta and b chains.

It localises to the cell inner membrane. Functionally, f(1)F(0) ATP synthase produces ATP from ADP in the presence of a proton or sodium gradient. F-type ATPases consist of two structural domains, F(1) containing the extramembraneous catalytic core and F(0) containing the membrane proton channel, linked together by a central stalk and a peripheral stalk. During catalysis, ATP synthesis in the catalytic domain of F(1) is coupled via a rotary mechanism of the central stalk subunits to proton translocation. Its function is as follows. This protein is part of the stalk that links CF(0) to CF(1). It either transmits conformational changes from CF(0) to CF(1) or is implicated in proton conduction. This chain is ATP synthase subunit delta, found in Rhizorhabdus wittichii (strain DSM 6014 / CCUG 31198 / JCM 15750 / NBRC 105917 / EY 4224 / RW1) (Sphingomonas wittichii).